The sequence spans 407 residues: Probable cysteine protease atg4 (407 aa).

Catalysis depends on C136, which acts as the Nucleophile. Residues D310 and H312 contribute to the active site.

Belongs to the peptidase C54 family.

The protein localises to the cytoplasm. It localises to the nucleus. It is found in the preautophagosomal structure. It carries out the reaction [protein]-C-terminal L-amino acid-glycyl-phosphatidylethanolamide + H2O = [protein]-C-terminal L-amino acid-glycine + a 1,2-diacyl-sn-glycero-3-phosphoethanolamine. Its function is as follows. Cysteine protease that is required for autophagy. Plays a key role in cytoplasm to vacuole transport (Cvt) and autophagy by mediating both proteolytic activation and delipidation of atg8. The protease activity is required for proteolytic activation of atg8 by the cleavage of the C-terminal amino acid of atg8 to reveal a C-terminal glycine. Azg8 ubiquitin-like activity requires the exposure of the glycine at the C-terminus for its conjugation to phosphatidylethanolamine (PE) and its insertion to membranes, which is necessary for autophagy. The atg8-PE conjugate mediates tethering between adjacent membranes and stimulates membrane hemifusion, leading to expansion of the autophagosomal membrane during autophagy. In addition to the protease activity, also catalyzes deconjugation of PE-conjugated forms of atg8 during macroautophagy since atg8 delipidation is required to release the protein from membranes, which facilitates multiple events during macroautophagy, and especially for efficient autophagosome biogenesis, the assembly of atg99-containing tubulovesicular clusters into phagophores/autophagosomes, and for the disassembly of PAS-associated ATG components. Atg8 delipidation by atg4 also recycles atg8-PE generated on inappropriate membranes to maintain a reservoir of unlipidated atg8 that is required for autophagosome formation at the PAS. This is Probable cysteine protease atg4 from Aspergillus oryzae (strain ATCC 42149 / RIB 40) (Yellow koji mold).